Reading from the N-terminus, the 385-residue chain is Methionyl-tRNA formyltransferase, mitochondrial (385 aa).

This sequence belongs to the Fmt family.

The protein localises to the mitochondrion. The catalysed reaction is L-methionyl-tRNA(fMet) + (6R)-10-formyltetrahydrofolate = N-formyl-L-methionyl-tRNA(fMet) + (6S)-5,6,7,8-tetrahydrofolate + H(+). In terms of biological role, methionyl-tRNA formyltransferase that formylates methionyl-tRNA in mitochondria and is crucial for translation initiation. The sequence is that of Methionyl-tRNA formyltransferase, mitochondrial (Mtfmt) from Rattus norvegicus (Rat).